Consider the following 348-residue polypeptide: MVLLAQGACCSNQWLAAVLLSLCSCLPAGQSVDFPWAAVDNMLVRKGDTAVLRCYLEDGASKGAWLNRSSIIFAGGDKWSVDPRVSISTLNKRDYSLQIQNVDVTDDGPYTCSVQTQHTPRTMQVHLTVQVPPKIYDISNDMTINEGTNVTLTCLATGKPEPVISWRHISPSAKPFENGQYLDIYGITRDQAGEYECSAENDVSFPDVKKVRVIVNFAPTIQEIKSGTVTPGRSGLIRCEGAGVPPPAFEWYKGEKRLFNGQQGIIIQNFSTRSILTVTNVTQEHFGNYTCVAANKLGTTNASLPLNPPSTAQYGITGSACDLFSCWSLALTLSSVISIFYLKNAILQ.

The signal sequence occupies residues 1–31 (MVLLAQGACCSNQWLAAVLLSLCSCLPAGQS). Ig-like C2-type domains lie at 32–128 (VDFP…VHLT), 133–215 (PKIY…RVIV), and 219–307 (PTIQ…LPLN). Cys54 and Cys112 are disulfide-bonded. N-linked (GlcNAc...) asparagine glycosylation is found at Asn67 and Asn149. Disulfide bonds link Cys154-Cys197 and Cys239-Cys291. At Tyr181 the chain carries Phosphotyrosine. N-linked (GlcNAc...) asparagine glycans are attached at residues Asn269, Asn280, Asn288, and Asn301. Gly318 is lipidated: GPI-anchor amidated glycine. Positions 319 to 348 (SACDLFSCWSLALTLSSVISIFYLKNAILQ) are cleaved as a propeptide — removed in mature form.

The protein belongs to the immunoglobulin superfamily. IgLON family. As to expression, expressed in brain.

The protein resides in the cell membrane. May be involved in cell-adhesion. May function as a trans-neural growth-promoting factor in regenerative axon sprouting in the mammalian brain. The protein is Neuronal growth regulator 1 (Negr1) of Mus musculus (Mouse).